The chain runs to 251 residues: Zinc import ATP-binding protein ZnuC (251 aa).

The ABC transporter domain occupies 5-220 (VSLENVSVSF…PEFISMFGPR (216 aa)). Position 37-44 (37-44 (GPNGAGKS)) interacts with ATP.

Belongs to the ABC transporter superfamily. Zinc importer (TC 3.A.1.15.5) family. In terms of assembly, the complex is composed of two ATP-binding proteins (ZnuC), two transmembrane proteins (ZnuB) and a solute-binding protein (ZnuA).

It is found in the cell inner membrane. It catalyses the reaction Zn(2+)(out) + ATP(in) + H2O(in) = Zn(2+)(in) + ADP(in) + phosphate(in) + H(+)(in). Functionally, part of the ABC transporter complex ZnuABC involved in zinc import. Responsible for energy coupling to the transport system. The polypeptide is Zinc import ATP-binding protein ZnuC (Salmonella choleraesuis (strain SC-B67)).